The chain runs to 149 residues: MKVLLLEDVKNLGKAGEVCEVKDGYGNNFLIANKKAKLATNEVINKYKAEAKKKAEKEALEKAQKLQMVETLQTITLTIHKKVGANGSLFGAITKEEITERLKEQHASLNLDKKDIELKHPIKSTGIYEIEVKLGSGVVGAFKIDVVAE.

The protein belongs to the bacterial ribosomal protein bL9 family.

In terms of biological role, binds to the 23S rRNA. The polypeptide is Large ribosomal subunit protein bL9 (Helicobacter pylori (strain HPAG1)).